Reading from the N-terminus, the 265-residue chain is Adenosylcobinamide-GDP ribazoletransferase (265 aa).

Transmembrane regions (helical) follow at residues 59 to 79, 113 to 133, 141 to 161, 183 to 203, and 206 to 226; these read LSWI…SVLI, IGTF…LLLV, WIFL…ALLL, LPPF…VYFL, and FQNQ…FVFY.

This sequence belongs to the CobS family. Mg(2+) is required as a cofactor.

The protein resides in the cell inner membrane. It catalyses the reaction alpha-ribazole + adenosylcob(III)inamide-GDP = adenosylcob(III)alamin + GMP + H(+). It carries out the reaction alpha-ribazole 5'-phosphate + adenosylcob(III)inamide-GDP = adenosylcob(III)alamin 5'-phosphate + GMP + H(+). Its pathway is cofactor biosynthesis; adenosylcobalamin biosynthesis; adenosylcobalamin from cob(II)yrinate a,c-diamide: step 7/7. Joins adenosylcobinamide-GDP and alpha-ribazole to generate adenosylcobalamin (Ado-cobalamin). Also synthesizes adenosylcobalamin 5'-phosphate from adenosylcobinamide-GDP and alpha-ribazole 5'-phosphate. The sequence is that of Adenosylcobinamide-GDP ribazoletransferase from Leptospira interrogans serogroup Icterohaemorrhagiae serovar copenhageni (strain Fiocruz L1-130).